The chain runs to 570 residues: Nucleoprotein (570 aa).

Residues 54 to 241 (MRKQKRDDGD…IDTKKSSLNI (188 aa)) form a binding site for the cap structure m7GTP region. Positions 390 and 392 each coordinate Mn(2+). Residues Glu-400, Cys-507, His-510, and Cys-530 each coordinate Zn(2+). Asp-534 is a Mn(2+) binding site.

It belongs to the arenaviridae nucleocapsid protein family. Homomultimerizes to form the nucleocapsid. Binds to viral genomic RNA. Interacts with glycoprotein G2. Interacts with protein Z; this interaction probably directs the encapsidated genome to budding sites. Interacts with protein L; this interaction does not interfere with Z-L interaction. Interacts with host IKBKE (via Protein kinase domain); the interaction inhibits IKBKE kinase activity.

The protein resides in the virion. The protein localises to the host cytoplasm. Encapsidates the genome, protecting it from nucleases. The encapsidated genomic RNA is termed the nucleocapsid (NC). Serves as template for viral transcription and replication. The increased presence of protein N in host cell does not seem to trigger the switch from transcription to replication as observed in other negative strain RNA viruses. Through the interaction with host IKBKE, strongly inhibits the phosphorylation and nuclear translocation of host IRF3, a protein involved in interferon activation pathway, leading to the inhibition of interferon-beta and IRF3-dependent promoters activation. Also encodes a functional 3'-5' exoribonuclease that degrades preferentially dsRNA substrates and thereby participates in the suppression of interferon induction. The polypeptide is Nucleoprotein (Homo sapiens (Human)).